An 88-amino-acid chain; its full sequence is Phosphocarrier protein HPr (88 aa).

The region spanning 1–88 (MASKEFHIVV…ETMTKEGLAE (88 aa)) is the HPr domain. The active-site Pros-phosphohistidine intermediate is His-15. Ser-46 is subject to Phosphoserine; by HPrK/P.

This sequence belongs to the HPr family.

The protein localises to the cytoplasm. Phosphorylation on Ser-46 inhibits the phosphoryl transfer from enzyme I to HPr. Its function is as follows. General (non sugar-specific) component of the phosphoenolpyruvate-dependent sugar phosphotransferase system (sugar PTS). This major carbohydrate active-transport system catalyzes the phosphorylation of incoming sugar substrates concomitantly with their translocation across the cell membrane. The phosphoryl group from phosphoenolpyruvate (PEP) is transferred to the phosphoryl carrier protein HPr by enzyme I. Phospho-HPr then transfers it to the PTS EIIA domain. In terms of biological role, P-Ser-HPr interacts with the catabolite control protein A (CcpA), forming a complex that binds to DNA at the catabolite response elements cre, operator sites preceding a large number of catabolite-regulated genes. Thus, P-Ser-HPr is a corepressor in carbon catabolite repression (CCR), a mechanism that allows bacteria to coordinate and optimize the utilization of available carbon sources. P-Ser-HPr also plays a role in inducer exclusion, in which it probably interacts with several non-PTS permeases and inhibits their transport activity. This is Phosphocarrier protein HPr (ptsH) from Lactococcus lactis subsp. lactis (strain IL1403) (Streptococcus lactis).